We begin with the raw amino-acid sequence, 311 residues long: Homeobox protein Hox-B1a (311 aa).

A DNA-binding region (homeobox) is located at residues 217–276 (QNTIRTNFTTKQLTELEKEFHFSKYLTRARRVEIAATLELNETQVKIWFQNRRMKQKKRE). The tract at residues 267-311 (NRRMKQKKREKEGLAPASSTSSKDLEDQSDHSTSTSPEASPSPDS) is disordered. Low complexity predominate over residues 298 to 311 (STSTSPEASPSPDS).

Belongs to the Antp homeobox family. Labial subfamily.

It localises to the nucleus. Sequence-specific transcription factor which is part of a developmental regulatory system that provides cells with specific positional identities on the anterior-posterior axis. The protein is Homeobox protein Hox-B1a (hoxb1a) of Danio rerio (Zebrafish).